An 835-amino-acid polypeptide reads, in one-letter code: BCL11 transcription factor A (835 aa).

Residues M1–L12 show a composition bias toward basic residues. Residues M1–G41 are disordered. The interval M1–R210 is required for nuclear body formation and for SUMO1 recruitment. A C2HC-type zinc finger spans residues L45 to C71. Zn(2+) contacts are provided by C48, C51, H66, and C71. A Phosphoserine modification is found at S86. K123 participates in a covalent cross-link: Glycyl lysine isopeptide (Lys-Gly) (interchain with G-Cter in SUMO2). At I162 the chain carries Phosphothreonine. Residue K164 forms a Glycyl lysine isopeptide (Lys-Gly) (interchain with G-Cter in SUMO2) linkage. The C2H2-type 1 zinc-finger motif lies at Y170–H193. At S205 the chain carries Phosphoserine. P214 bears the Phosphothreonine mark. Residue R271 is modified to Asymmetric dimethylarginine. Residues A323–S376 are disordered. S332 and S337 each carry phosphoserine. Pro residues predominate over residues L355–P372. 2 consecutive C2H2-type zinc fingers follow at residues K377–H399 and Y405–H429. A compositionally biased stretch (basic residues) spans K421–K430. Disordered regions lie at residues K421–S458, K471–D512, and R572–K619. Residues G441–P450 show a composition bias toward polar residues. Residues S446 and S447 each carry the phosphoserine modification. A compositionally biased stretch (acidic residues) spans N482–T506. Positions H574–T584 are enriched in basic and acidic residues. At S608 the chain carries Phosphoserine. K620 is covalently cross-linked (Glycyl lysine isopeptide (Lys-Gly) (interchain with G-Cter in SUMO2)). A phosphoserine mark is found at S625 and S630. A Glycyl lysine isopeptide (Lys-Gly) (interchain with G-Cter in SUMO1) cross-link involves residue K634. Over residues S682–S696 the composition is skewed to low complexity. The residue at position 701 (T701) is a Phosphothreonine. Gly residues predominate over residues L706 to G720. Residues E737–E835 form a DNA-binding region. Residues D742–H764 form a C2H2-type 4 zinc finger. Zn(2+)-binding residues include C744, C747, H760, and H764. The segment covering H764–E773 has biased composition (polar residues). Positions T765–P769 are disordered. The C2H2-type 5 zinc-finger motif lies at Y770–H792. Zn(2+) is bound by residues C772, C775, H788, and H792. Residues G793–V799 form a disordered region. The C2H2-type 6 zinc-finger motif lies at Y800 to H823. Residues C802, C805, H818, and H823 each coordinate Zn(2+).

In terms of assembly, homotetrameric; self-associates via C2HC-type zinc finger domain. Interacts with MTA2, a component of the nucleosome remodeling and deacetylase (NuRD) repressor complex. Interacts with NR2F1, PIAS3, NR2F2 and NR2F6. Interacts with TBR1. In terms of processing, sumoylated with SUMO1. In terms of tissue distribution, isoforms are expressed in a tissue-specific fashion. Isoforms 1, isoform 2, and isoform 3 are expressed at similar levels in testis, kidney and spleen. Isoform 1 is expressed in the stomach, and isoform 2 is expressed exclusively in the lung. Overexpression following proviral integration in hematopoietic cells results in the generation of myeloid leukemia.

The protein resides in the cytoplasm. The protein localises to the nucleus. Its function is as follows. Transcription factor. Associated with the BAF SWI/SNF chromatin remodeling complex. Binds to the 5'-TGACCA-3' sequence motif in regulatory regions of target genes. Involved in brain development. May play a role in hematopoiesis. Essential factor in lymphopoiesis, required for B-cell formation in fetal liver. May function as a modulator of the transcriptional repression activity of NR2F2. The polypeptide is BCL11 transcription factor A (Bcl11a) (Mus musculus (Mouse)).